Here is a 978-residue protein sequence, read N- to C-terminus: Calsyntenin-1 (978 aa).

The signal sequence occupies residues 1–26; sequence MTFHKTFGYGCIVLICFELLFAGVET. At 27–876 the chain is on the extracellular side; sequence SSENDDEYLT…SFIHKAEGSH (850 aa). 2 Cadherin domains span residues 37–143 and 144–249; these read QKEI…APTF and LEPS…MPER. N-linked (GlcNAc...) asparagine glycosylation is present at Asn53. N-linked (GlcNAc...) asparagine glycans are attached at residues Asn304, Asn486, Asn608, and Asn823. A helical transmembrane segment spans residues 877 to 897; it reads VTMLIILVSVFLAVLLCGVSI. The Cytoplasmic segment spans residues 898–978; it reads ARLKNNQKYI…EWDNSNIFQQ (81 aa). A disordered region spans residues 937-958; the sequence is ADVTSDASSESENSESEDEEAL. The segment covering 948–957 has biased composition (acidic residues); it reads ENSESEDEEA.

This sequence belongs to the calsyntenin family.

The protein resides in the postsynaptic cell membrane. Functionally, postsynaptic adhesion molecule that binds to presynaptic neurexins to mediate both excitatory and inhibitory synapse formation. Promotes synapse development by acting as a cell adhesion molecule at the postsynaptic membrane, which associates with neurexin-alpha at the presynaptic membrane. The protein is Calsyntenin-1 (Cals) of Drosophila melanogaster (Fruit fly).